A 500-amino-acid polypeptide reads, in one-letter code: Cytochrome P450 71B26 (500 aa).

Residues methionine 1–phenylalanine 21 form a helical membrane-spanning segment. Cysteine 440 is a heme binding site.

This sequence belongs to the cytochrome P450 family. Heme is required as a cofactor.

The protein resides in the membrane. This is Cytochrome P450 71B26 (CYP71B26) from Arabidopsis thaliana (Mouse-ear cress).